A 279-amino-acid polypeptide reads, in one-letter code: Acetyl-coenzyme A carboxylase carboxyl transferase subunit beta (279 aa).

In terms of domain architecture, CoA carboxyltransferase N-terminal spans 23–279 (LWWKCEECGA…LTTLLSLMKL (257 aa)). The Zn(2+) site is built by Cys27, Cys30, Cys46, and Cys49. The C4-type zinc finger occupies 27-49 (CEECGAALHKKQMEASDHTCPQC).

It belongs to the AccD/PCCB family. As to quaternary structure, acetyl-CoA carboxylase is a heterohexamer composed of biotin carboxyl carrier protein (AccB), biotin carboxylase (AccC) and two subunits each of ACCase subunit alpha (AccA) and ACCase subunit beta (AccD). Zn(2+) serves as cofactor.

It is found in the cytoplasm. The catalysed reaction is N(6)-carboxybiotinyl-L-lysyl-[protein] + acetyl-CoA = N(6)-biotinyl-L-lysyl-[protein] + malonyl-CoA. It participates in lipid metabolism; malonyl-CoA biosynthesis; malonyl-CoA from acetyl-CoA: step 1/1. Component of the acetyl coenzyme A carboxylase (ACC) complex. Biotin carboxylase (BC) catalyzes the carboxylation of biotin on its carrier protein (BCCP) and then the CO(2) group is transferred by the transcarboxylase to acetyl-CoA to form malonyl-CoA. This Chlorobium chlorochromatii (strain CaD3) protein is Acetyl-coenzyme A carboxylase carboxyl transferase subunit beta.